A 203-amino-acid polypeptide reads, in one-letter code: Dephospho-CoA kinase (203 aa).

The 199-residue stretch at 3–201 (SVGLTGGIGS…QRYLGYAAAA (199 aa)) folds into the DPCK domain. An ATP-binding site is contributed by 11–16 (GSGKTT).

Belongs to the CoaE family.

The protein resides in the cytoplasm. It carries out the reaction 3'-dephospho-CoA + ATP = ADP + CoA + H(+). It functions in the pathway cofactor biosynthesis; coenzyme A biosynthesis; CoA from (R)-pantothenate: step 5/5. In terms of biological role, catalyzes the phosphorylation of the 3'-hydroxyl group of dephosphocoenzyme A to form coenzyme A. This chain is Dephospho-CoA kinase, found in Burkholderia thailandensis (strain ATCC 700388 / DSM 13276 / CCUG 48851 / CIP 106301 / E264).